We begin with the raw amino-acid sequence, 265 residues long: Early E4 31 kDa protein (265 aa).

This sequence belongs to the adenoviridae E4 30 to 34 kDa protein family. Interacts with E1B-55k.

The protein localises to the host nucleus. Its subcellular location is the host cytoplasm. Functionally, plays a major role to prevent cellular inhibition of viral genome replication by nuclear bodies. Assembles an SCF-like E3 ubiquitin ligase complex based on the cellular proteins ELOB, ELOC, CUL5 and RBX1, in cooperation with viral E1B-55K. This viral RING-type ligase ubiquitinates cellular substrates prior to proteasomal degradation: p53/TP53, LIG4, MRE11-RAD50-NBS1 (MRN) complex, ITGA3, DAXX and BLM. The protein is Early E4 31 kDa protein of Canine adenovirus serotype 1 (strain RI261) (CAdV-1).